The chain runs to 370 residues: 3-dehydroquinate synthase (370 aa).

Residues 112–116 (GVVGD), 136–137 (TS), lysine 149, lysine 158, and 176–179 (TLRT) contribute to the NAD(+) site. Zn(2+) contacts are provided by glutamate 191, histidine 254, and histidine 276.

Belongs to the sugar phosphate cyclases superfamily. Dehydroquinate synthase family. It depends on Co(2+) as a cofactor. Zn(2+) serves as cofactor. NAD(+) is required as a cofactor.

The protein resides in the cytoplasm. The catalysed reaction is 7-phospho-2-dehydro-3-deoxy-D-arabino-heptonate = 3-dehydroquinate + phosphate. It functions in the pathway metabolic intermediate biosynthesis; chorismate biosynthesis; chorismate from D-erythrose 4-phosphate and phosphoenolpyruvate: step 2/7. Its function is as follows. Catalyzes the conversion of 3-deoxy-D-arabino-heptulosonate 7-phosphate (DAHP) to dehydroquinate (DHQ). This Xanthomonas oryzae pv. oryzae (strain PXO99A) protein is 3-dehydroquinate synthase.